We begin with the raw amino-acid sequence, 790 residues long: cAMP and cAMP-inhibited cGMP 3',5'-cyclic phosphodiesterase 10A (790 aa).

3',5'-cyclic AMP is bound by residues 290–291, 334–335, threonine 368, glutamine 387, and histidine 519; these read RC and IA. Positions 446–763 constitute a PDEase domain; it reads TSEEWQGLMR…NQWEKVIRGE (318 aa). The active-site Proton donor is the histidine 519. Histidine 519 is a 3',5'-cyclic GMP binding site. Residues histidine 523, histidine 557, aspartate 558, and aspartate 668 each coordinate a divalent metal cation. 3',5'-cyclic AMP is bound at residue glutamine 720. Glutamine 720 is a binding site for 3',5'-cyclic GMP. The segment at 768 to 790 is disordered; that stretch reads WISGPGPAPSKSTPEKLNVKVED. The segment covering 780–790 has biased composition (basic and acidic residues); sequence TPEKLNVKVED.

Belongs to the cyclic nucleotide phosphodiesterase family. As to quaternary structure, homodimer. A divalent metal cation is required as a cofactor. As to expression, detected in striatum (at protein level). Detected in testis and brain.

It localises to the cytoplasm. It is found in the cytosol. The enzyme catalyses a nucleoside 3',5'-cyclic phosphate + H2O = a nucleoside 5'-phosphate + H(+). It carries out the reaction 3',5'-cyclic AMP + H2O = AMP + H(+). The catalysed reaction is 3',5'-cyclic GMP + H2O = GMP + H(+). Its pathway is purine metabolism; 3',5'-cyclic AMP degradation; AMP from 3',5'-cyclic AMP: step 1/1. It participates in purine metabolism; 3',5'-cyclic GMP degradation; GMP from 3',5'-cyclic GMP: step 1/1. In terms of biological role, plays a role in signal transduction by regulating the intracellular concentration of cyclic nucleotides. Can hydrolyze both cAMP and cGMP, but has higher affinity for cAMP and is more efficient with cAMP as substrate. May play a critical role in regulating cAMP and cGMP levels in the striatum, a region of the brain that contributes to the control of movement and cognition. The chain is cAMP and cAMP-inhibited cGMP 3',5'-cyclic phosphodiesterase 10A (Pde10a) from Mus musculus (Mouse).